Reading from the N-terminus, the 464-residue chain is MLKVFNTLTRRLEDFKPLEPPLVRMYVCGPTVYDHSHIGHARTWVAFDIIKKYLRLKGYNVIHVQNITDIDDKIINRARELGVSWKEVADTYTNEYFELMKKLKVFPTVHPRVTDHIDDIIEFVQDLVDKGYAYVTQSGVYFDVDKYPYYGQLSGIKDKKMWSQEEFVKDKKNPYDFALWKCAKPGEPWWDSPWCKGRPGWHIECSTMSSKYLGKQFDVHGGARDLIFPHHENEIAQSEARFGVRPWVKYWLHSGYLTVKGEKMSKSLGNIVPLKDVLKSFEPEVVRYWLSSAHYRTELDFSWERLEEAKRSLTRMRMTVDELRKIVKKESPKGKLDEWEIKAIYEVSKIRNEFYDAMDNDFNTPEAWAAVREALRLGNKAIEEGSWEVSLAVLEFVNEADKVFEVFEERVHEGVEPFIDLLVEVRSKLREMKQWELADYIRSKLDELGVKLLDKGKETEWRFA.

Cys-28 lines the Zn(2+) pocket. The 'HIGH' region motif lies at Pro-30–His-40. Zn(2+) is bound by residues Cys-205, His-230, and Glu-234. The 'KMSKS' region motif lies at Lys-263 to Ser-267. Lys-266 serves as a coordination point for ATP.

This sequence belongs to the class-I aminoacyl-tRNA synthetase family. Requires Zn(2+) as cofactor.

It is found in the cytoplasm. It carries out the reaction tRNA(Cys) + L-cysteine + ATP = L-cysteinyl-tRNA(Cys) + AMP + diphosphate. The protein is Cysteine--tRNA ligase of Ignicoccus hospitalis (strain KIN4/I / DSM 18386 / JCM 14125).